The following is a 310-amino-acid chain: Ribosomal RNA small subunit methyltransferase H (310 aa).

Residues 32–34, D52, F79, D100, and Q107 contribute to the S-adenosyl-L-methionine site; that span reads GGH.

It belongs to the methyltransferase superfamily. RsmH family.

The protein resides in the cytoplasm. It carries out the reaction cytidine(1402) in 16S rRNA + S-adenosyl-L-methionine = N(4)-methylcytidine(1402) in 16S rRNA + S-adenosyl-L-homocysteine + H(+). In terms of biological role, specifically methylates the N4 position of cytidine in position 1402 (C1402) of 16S rRNA. The protein is Ribosomal RNA small subunit methyltransferase H of Bacillus thuringiensis subsp. konkukian (strain 97-27).